Reading from the N-terminus, the 161-residue chain is Nucleotide-binding protein ABO_0048 (161 aa).

It belongs to the YajQ family.

Functionally, nucleotide-binding protein. The sequence is that of Nucleotide-binding protein ABO_0048 from Alcanivorax borkumensis (strain ATCC 700651 / DSM 11573 / NCIMB 13689 / SK2).